The chain runs to 109 residues: Small ribosomal subunit protein uS17 (109 aa).

This sequence belongs to the universal ribosomal protein uS17 family. Part of the 30S ribosomal subunit.

One of the primary rRNA binding proteins, it binds specifically to the 5'-end of 16S ribosomal RNA. In Methanosarcina mazei (strain ATCC BAA-159 / DSM 3647 / Goe1 / Go1 / JCM 11833 / OCM 88) (Methanosarcina frisia), this protein is Small ribosomal subunit protein uS17.